Consider the following 364-residue polypeptide: DNA replication and repair protein RecF (364 aa).

30 to 37 (GNNGQGKT) lines the ATP pocket.

This sequence belongs to the RecF family.

The protein localises to the cytoplasm. Functionally, the RecF protein is involved in DNA metabolism; it is required for DNA replication and normal SOS inducibility. RecF binds preferentially to single-stranded, linear DNA. It also seems to bind ATP. This Citrifermentans bemidjiense (strain ATCC BAA-1014 / DSM 16622 / JCM 12645 / Bem) (Geobacter bemidjiensis) protein is DNA replication and repair protein RecF.